The sequence spans 247 residues: ATP synthase subunit a, chloroplastic (247 aa).

5 consecutive transmembrane segments (helical) span residues 38-58 (QVLI…IIAV), 95-115 (VPFI…GALL), 134-154 (INTT…AGLT), 199-219 (LVVV…VMFL), and 220-240 (GLFT…AYIG).

Belongs to the ATPase A chain family. F-type ATPases have 2 components, CF(1) - the catalytic core - and CF(0) - the membrane proton channel. CF(1) has five subunits: alpha(3), beta(3), gamma(1), delta(1), epsilon(1). CF(0) has four main subunits: a, b, b' and c.

Its subcellular location is the plastid. The protein localises to the chloroplast thylakoid membrane. Its function is as follows. Key component of the proton channel; it plays a direct role in the translocation of protons across the membrane. This is ATP synthase subunit a, chloroplastic from Carica papaya (Papaya).